We begin with the raw amino-acid sequence, 147 residues long: Spermidine export protein MdtJ (147 aa).

Transmembrane regions (helical) follow at residues 1 to 21 (MIYW…TLSM), 31 to 51 (TGHI…SLAV), 54 to 74 (VALG…ITIF), and 81 to 101 (ETLS…ILLV). The span at 105–117 (TRKPKQPNRHRGN) shows a compositional bias: basic residues. Positions 105–147 (TRKPKQPNRHRGNRPPSVQGLKTQTTGHHKGVAVESGEHHAAA) are disordered.

Belongs to the drug/metabolite transporter (DMT) superfamily. Small multidrug resistance (SMR) (TC 2.A.7.1) family. MdtJ subfamily. Forms a complex with MdtI.

Its subcellular location is the cell inner membrane. Functionally, catalyzes the excretion of spermidine. The chain is Spermidine export protein MdtJ from Yersinia pseudotuberculosis serotype O:3 (strain YPIII).